Reading from the N-terminus, the 225-residue chain is NAD(P)H-quinone oxidoreductase subunit K, chloroplastic (225 aa).

[4Fe-4S] cluster-binding residues include Cys43, Cys44, Cys108, and Cys139.

Belongs to the complex I 20 kDa subunit family. As to quaternary structure, NDH is composed of at least 16 different subunits, 5 of which are encoded in the nucleus. [4Fe-4S] cluster is required as a cofactor.

The protein resides in the plastid. It localises to the chloroplast thylakoid membrane. The catalysed reaction is a plastoquinone + NADH + (n+1) H(+)(in) = a plastoquinol + NAD(+) + n H(+)(out). It catalyses the reaction a plastoquinone + NADPH + (n+1) H(+)(in) = a plastoquinol + NADP(+) + n H(+)(out). NDH shuttles electrons from NAD(P)H:plastoquinone, via FMN and iron-sulfur (Fe-S) centers, to quinones in the photosynthetic chain and possibly in a chloroplast respiratory chain. The immediate electron acceptor for the enzyme in this species is believed to be plastoquinone. Couples the redox reaction to proton translocation, and thus conserves the redox energy in a proton gradient. This is NAD(P)H-quinone oxidoreductase subunit K, chloroplastic from Lemna minor (Common duckweed).